The primary structure comprises 745 residues: Copper-transporting ATPase (745 aa).

Residues 1 to 67 (MKESFYIEGM…LIEKLGYSPK (67 aa)) enclose the HMA domain. The Cytoplasmic portion of the chain corresponds to 1–83 (MKESFYIEGM…KKEFFSPNVK (83 aa)). Residues Cys-12 and Cys-15 each coordinate Cu cation. A helical transmembrane segment spans residues 84 to 104 (LALAVIFTLFVVYLSMGAMLS). The Extracellular portion of the chain corresponds to 105-124 (PSLLPESLLAIDNHSNFLNA). The helical transmembrane segment at 125-144 (CLQLIGALIVMHLGRDFYIQ) threads the bilayer. Residues 145–151 (GFKALWH) lie on the Cytoplasmic side of the membrane. Residues 152–172 (RQPNMSSLIAIGTSAALISSL) traverse the membrane as a helical segment. Residues 173-194 (WQLYLVYTNHYTDQWSYGHYYF) lie on the Extracellular side of the membrane. A helical transmembrane segment spans residues 195 to 215 (ESVCVILMFVMVGKRIENVSK). Residues 216 to 343 (DKALDAMQAL…KAEISRLADK (128 aa)) are Cytoplasmic-facing. A helical membrane pass occupies residues 344-366 (VSSVFVPSVIAISILAFVVWLII). Residues 367–379 (APKPDFWWNFGIA) are Extracellular-facing. Residues 380–397 (LEVFVSVLVISCPCALGL) traverse the membrane as a helical segment. Topologically, residues 398 to 685 (ATPMSILVAN…KLSQATIKNI (288 aa)) are cytoplasmic. The 4-aspartylphosphate intermediate role is filled by Asp-435. Asp-631 and Asp-635 together coordinate Mg(2+). The chain crosses the membrane as a helical span at residues 686–705 (KENLFWAFCYNSVFIPLACG). The Extracellular segment spans residues 706 to 716 (VLYKANLMLSP). The chain crosses the membrane as a helical span at residues 717-735 (AIAGLAMSLSSVSVVLNSQ). The Cytoplasmic portion of the chain corresponds to 736-745 (RLRNFKIKDH).

This sequence belongs to the cation transport ATPase (P-type) (TC 3.A.3) family. Type IB subfamily.

Its subcellular location is the cell membrane. It catalyses the reaction Cu(2+)(in) + ATP + H2O = Cu(2+)(out) + ADP + phosphate + H(+). Functionally, probably involved in copper export. The protein is Copper-transporting ATPase (copA) of Helicobacter pylori (strain ATCC 700392 / 26695) (Campylobacter pylori).